We begin with the raw amino-acid sequence, 131 residues long: Small ribosomal subunit protein bS6 (131 aa).

Residues 94–131 (DAVTEESQLAKNADEKRARKATTRRPDSNDDNDNHSDD) form a disordered region. Residues 117–131 (RRPDSNDDNDNHSDD) show a composition bias toward basic and acidic residues.

The protein belongs to the bacterial ribosomal protein bS6 family.

Functionally, binds together with bS18 to 16S ribosomal RNA. This chain is Small ribosomal subunit protein bS6, found in Psychrobacter cryohalolentis (strain ATCC BAA-1226 / DSM 17306 / VKM B-2378 / K5).